The chain runs to 295 residues: MDLTEWIVTIIMMIEFLLGNCANFFIMVVNAIDCMKRRKISSADRIITALAISRIGLLWAMLMNWHSRVYTTDTYSFQVTAFSGIIWAITNHFTTWLGTILSMFYLFKIANFSNCLFLHLKRKLDSVLLVIFLVSSLLVFAYLGVVNIKKIAWLSVHEGNVTVKSKLMNIASIRDTLLFSLINIAPFGISLTCVLLLIYSLGKHLKNMKFYGKGCQDQSTMVHIRALQTVVSFLLLYATYSSCVIISGWSIQNVPIFLFCVTIGAFYPAGHSCILIWGNQKLKQFLLLFLRQMKC.

Residues 1–5 are Extracellular-facing; it reads MDLTE. A helical transmembrane segment spans residues 6 to 26; the sequence is WIVTIIMMIEFLLGNCANFFI. Residues 27–45 lie on the Cytoplasmic side of the membrane; the sequence is MVVNAIDCMKRRKISSADR. Residues 46–66 traverse the membrane as a helical segment; it reads IITALAISRIGLLWAMLMNWH. Over 67-83 the chain is Extracellular; that stretch reads SRVYTTDTYSFQVTAFS. Residues 84–104 form a helical membrane-spanning segment; the sequence is GIIWAITNHFTTWLGTILSMF. The Cytoplasmic portion of the chain corresponds to 105 to 125; the sequence is YLFKIANFSNCLFLHLKRKLD. A helical membrane pass occupies residues 126-146; it reads SVLLVIFLVSSLLVFAYLGVV. Over 147–177 the chain is Extracellular; the sequence is NIKKIAWLSVHEGNVTVKSKLMNIASIRDTL. Asn160 carries an N-linked (GlcNAc...) asparagine glycan. A helical membrane pass occupies residues 178-198; it reads LFSLINIAPFGISLTCVLLLI. Topologically, residues 199–230 are cytoplasmic; the sequence is YSLGKHLKNMKFYGKGCQDQSTMVHIRALQTV. The helical transmembrane segment at 231-251 threads the bilayer; sequence VSFLLLYATYSSCVIISGWSI. Topologically, residues 252-255 are extracellular; sequence QNVP. Residues 256–276 form a helical membrane-spanning segment; sequence IFLFCVTIGAFYPAGHSCILI. The Cytoplasmic portion of the chain corresponds to 277–295; that stretch reads WGNQKLKQFLLLFLRQMKC.

This sequence belongs to the G-protein coupled receptor T2R family.

It localises to the membrane. Putative taste receptor which may play a role in the perception of bitterness. In Rattus norvegicus (Rat), this protein is Taste receptor type 2 member 120.